A 254-amino-acid chain; its full sequence is Imidazole glycerol phosphate synthase subunit HisF (254 aa).

Catalysis depends on residues Asp12 and Asp132.

Belongs to the HisA/HisF family. In terms of assembly, heterodimer of HisH and HisF.

Its subcellular location is the cytoplasm. The enzyme catalyses 5-[(5-phospho-1-deoxy-D-ribulos-1-ylimino)methylamino]-1-(5-phospho-beta-D-ribosyl)imidazole-4-carboxamide + L-glutamine = D-erythro-1-(imidazol-4-yl)glycerol 3-phosphate + 5-amino-1-(5-phospho-beta-D-ribosyl)imidazole-4-carboxamide + L-glutamate + H(+). Its pathway is amino-acid biosynthesis; L-histidine biosynthesis; L-histidine from 5-phospho-alpha-D-ribose 1-diphosphate: step 5/9. Its function is as follows. IGPS catalyzes the conversion of PRFAR and glutamine to IGP, AICAR and glutamate. The HisF subunit catalyzes the cyclization activity that produces IGP and AICAR from PRFAR using the ammonia provided by the HisH subunit. This chain is Imidazole glycerol phosphate synthase subunit HisF, found in Symbiobacterium thermophilum (strain DSM 24528 / JCM 14929 / IAM 14863 / T).